A 181-amino-acid chain; its full sequence is Malignant T-cell-amplified sequence 1 (181 aa).

Thr81 bears the Phosphothreonine; by MAPK1 and MAPK3 mark. Residues 92–171 (LPHQQVDKGA…IGIENIHYLN (80 aa)) enclose the PUA domain. Ser118 is subject to Phosphoserine; by CDK1.

The protein belongs to the MCTS1 family. As to quaternary structure, interacts (via PUA domain) with DENR; the complex regulates translation reinitiation. In terms of processing, phosphorylation is critical for stabilization and promotion of cell proliferation. In terms of tissue distribution, ubiquitous. Over-expressed in T-cell lymphoid cell lines and in non-Hodgkin lymphoma cell lines as well as in a subset of primary large B-cell lymphomas.

The protein resides in the cytoplasm. Functionally, translation regulator forming a complex with DENR to promote translation reinitiation. Translation reinitiation is the process where the small ribosomal subunit remains attached to the mRNA following termination of translation of a regulatory upstream ORF (uORF), and resume scanning on the same mRNA molecule to initiate translation of a downstream ORF, usually the main ORF (mORF). The MCTS1/DENR complex is pivotal to two linked mechanisms essential for translation reinitiation. Firstly, the dissociation of deacylated tRNAs from post-termination 40S ribosomal complexes during ribosome recycling. Secondly, the recruitment in an EIF2-independent manner of aminoacylated initiator tRNA to P site of 40S ribosomes for a new round of translation. This regulatory mechanism governs the translation of more than 150 genes which translation reinitiation is MCTS1/DENR complex-dependent. Consequently, modulates various unrelated biological processes including cell cycle regulation and DNA damage signaling and repair. Notably, it positively regulates interferon gamma immunity to mycobacteria by enhancing the translation of JAK2. The polypeptide is Malignant T-cell-amplified sequence 1 (MCTS1) (Homo sapiens (Human)).